A 129-amino-acid chain; its full sequence is Large ribosomal subunit protein bL12 (129 aa).

Belongs to the bacterial ribosomal protein bL12 family. In terms of assembly, homodimer. Part of the ribosomal stalk of the 50S ribosomal subunit. Forms a multimeric L10(L12)X complex, where L10 forms an elongated spine to which 2 to 4 L12 dimers bind in a sequential fashion. Binds GTP-bound translation factors.

In terms of biological role, forms part of the ribosomal stalk which helps the ribosome interact with GTP-bound translation factors. Is thus essential for accurate translation. The chain is Large ribosomal subunit protein bL12 from Photobacterium profundum (strain SS9).